The sequence spans 270 residues: Formamidopyrimidine-DNA glycosylase (270 aa).

The Schiff-base intermediate with DNA role is filled by P2. E3 functions as the Proton donor in the catalytic mechanism. K58 acts as the Proton donor; for beta-elimination activity in catalysis. DNA-binding residues include H91, R110, and K151. Residues 236–270 (FAYGRGGQPCKVCGTTLREIKLGQRASVYCPKCQR) form an FPG-type zinc finger. The Proton donor; for delta-elimination activity role is filled by R260.

It belongs to the FPG family. In terms of assembly, monomer. Zn(2+) serves as cofactor.

The catalysed reaction is Hydrolysis of DNA containing ring-opened 7-methylguanine residues, releasing 2,6-diamino-4-hydroxy-5-(N-methyl)formamidopyrimidine.. It carries out the reaction 2'-deoxyribonucleotide-(2'-deoxyribose 5'-phosphate)-2'-deoxyribonucleotide-DNA = a 3'-end 2'-deoxyribonucleotide-(2,3-dehydro-2,3-deoxyribose 5'-phosphate)-DNA + a 5'-end 5'-phospho-2'-deoxyribonucleoside-DNA + H(+). Involved in base excision repair of DNA damaged by oxidation or by mutagenic agents. Acts as a DNA glycosylase that recognizes and removes damaged bases. Has a preference for oxidized purines, such as 7,8-dihydro-8-oxoguanine (8-oxoG). Has AP (apurinic/apyrimidinic) lyase activity and introduces nicks in the DNA strand. Cleaves the DNA backbone by beta-delta elimination to generate a single-strand break at the site of the removed base with both 3'- and 5'-phosphates. In Pseudomonas syringae pv. tomato (strain ATCC BAA-871 / DC3000), this protein is Formamidopyrimidine-DNA glycosylase.